The following is a 306-amino-acid chain: Glutamyl-Q tRNA(Asp) synthetase (306 aa).

L-glutamate-binding positions include 29–33 (RFAPS) and D65. Positions 32–42 (PSPTGPLHLGN) match the 'HIGH' region motif. Zn(2+) is bound by residues C121, C123, Y141, and C145. L-glutamate is bound by residues Y188 and R206. The 'KMSKS' region motif lies at 244–248 (KLAKR). Position 247 (K247) interacts with ATP.

The protein belongs to the class-I aminoacyl-tRNA synthetase family. GluQ subfamily. Requires Zn(2+) as cofactor.

Its function is as follows. Catalyzes the tRNA-independent activation of glutamate in presence of ATP and the subsequent transfer of glutamate onto a tRNA(Asp). Glutamate is transferred on the 2-amino-5-(4,5-dihydroxy-2-cyclopenten-1-yl) moiety of the queuosine in the wobble position of the QUC anticodon. The chain is Glutamyl-Q tRNA(Asp) synthetase from Prochlorococcus marinus (strain MIT 9303).